Reading from the N-terminus, the 307-residue chain is D-alanine--D-alanine ligase (307 aa).

Residues 105–304 (KMLWKGFGLP…FEQLVVKILE (200 aa)) form the ATP-grasp domain. 135–190 (VERLGLPLMVKPSREGSSVGLTKVNAVEELKNAVDLALTHDDTVLIEEWLSGIEMT) is an ATP binding site. Mg(2+)-binding residues include Asp-258, Glu-271, and Asn-273.

It belongs to the D-alanine--D-alanine ligase family. Mg(2+) is required as a cofactor. It depends on Mn(2+) as a cofactor.

It is found in the cytoplasm. The catalysed reaction is 2 D-alanine + ATP = D-alanyl-D-alanine + ADP + phosphate + H(+). It functions in the pathway cell wall biogenesis; peptidoglycan biosynthesis. Its function is as follows. Cell wall formation. In Mannheimia succiniciproducens (strain KCTC 0769BP / MBEL55E), this protein is D-alanine--D-alanine ligase.